The primary structure comprises 88 residues: Putative membrane protein insertion efficiency factor (88 aa).

The protein belongs to the UPF0161 family.

It localises to the cell inner membrane. Could be involved in insertion of integral membrane proteins into the membrane. The chain is Putative membrane protein insertion efficiency factor from Rickettsia canadensis (strain McKiel).